The sequence spans 469 residues: Crinkler effector protein 1 (469 aa).

The first 17 residues, 1–17, serve as a signal peptide directing secretion; it reads MSITLLCLIKGNTLANA. The segment at 18-57 is LQLFLAK-like domain; the sequence is FPVDIDKDQLVGHLKKVIKAEQPQTFANVDAKDLKLWRVP. The DWL domain stretch occupies residues 58–96; it reads ISDDHDDQLRNLSLEDSDELLAIRKISKYFPDSPPEECI. N68 is a glycosylation site (N-linked (GlcNAc...) asparagine). The HVLVXXP motif signature appears at 97–103; it reads HVLVEPP. N-linked (GlcNAc...) asparagine glycosylation is found at N126, N181, and N248.

The protein belongs to the Crinkler effector family. In terms of assembly, homodimer.

Its subcellular location is the secreted. It is found in the host nucleus. Effector that participates in the arbuscule development step of the symbiosis. Arbuscular mycorrhizal (AM) symbiosis is one of the most prominent and beneficial plant-microbe interactions that facilitates mineral nutrition and confers tolerance to biotic and abiotic stresses. Is not involved in cell death processes. The sequence is that of Crinkler effector protein 1 from Rhizophagus irregularis (strain DAOM 181602 / DAOM 197198 / MUCL 43194) (Arbuscular mycorrhizal fungus).